The chain runs to 524 residues: Adhesion G-protein coupled receptor G5 (524 aa).

Residues 1–23 form the signal peptide; that stretch reads MDPHGALFFYLCLLAAQVVLVET. The Extracellular portion of the chain corresponds to 24 to 246; it reads LSDLLVLMKR…PAELQVPLEY (223 aa). Residues asparagine 58, asparagine 65, asparagine 96, asparagine 143, asparagine 169, and asparagine 175 are each glycosylated (N-linked (GlcNAc...) asparagine). Positions 74 to 235 constitute a GAIN-B domain; that stretch reads QSLVFKLSCD…AVLMQLSGDP (162 aa). Disulfide bonds link cysteine 185-cysteine 217 and cysteine 205-cysteine 219. Residues 185–235 form a GPS region; sequence CVFWKEGASKSSWGAWSPEGCYTEQPSATQVLCHCNHLTYFAVLMQLSGDP. Residues 224–232 are stachel; the sequence is YFAVLMQLS. The chain crosses the membrane as a helical span at residues 247–267; it reads ISFVGCSISIVASLLTILLYA. The Cytoplasmic segment spans residues 268 to 284; sequence QSRKQSDSTTRIHMNLN. A helical membrane pass occupies residues 285 to 305; that stretch reads GSVLLLNVTFLLSSQMTLPTM. The Extracellular segment spans residues 306 to 319; the sequence is PRPVCKVLAAVLHY. A disulfide bridge connects residues cysteine 310 and cysteine 400. The chain crosses the membrane as a helical span at residues 320-340; that stretch reads ALLSSLTWMAIEGFNLYLFLG. At 341–351 the chain is on the cytoplasmic side; that stretch reads RVYNAYIRRYL. The chain crosses the membrane as a helical span at residues 352–372; the sequence is LKLCMLGWGFPALLVLLLLMI. Residues 373-413 are Extracellular-facing; sequence KSSVYGPCVTSLSKSQENGTGFQNVSMCWIRSPMVHSILVM. Residues asparagine 390 and asparagine 396 are each glycosylated (N-linked (GlcNAc...) asparagine). Residues 414-434 traverse the membrane as a helical segment; sequence GYGGFTSLFNLVVLAWALWIL. Residues 435–453 are Cytoplasmic-facing; it reads CRLRAREKALSPWAYRDTA. A helical membrane pass occupies residues 454–476; it reads MVLGLTVLLGTTWTLAFFSFGVF. At 477-480 the chain is on the extracellular side; sequence LLPQ. A helical membrane pass occupies residues 481–500; the sequence is LFLFTIFNSLYGFFLFLWFC. Residues 501–524 are Cytoplasmic-facing; that stretch reads SQKRYSDAEAKAEMEAVSSSQMTH.

The protein belongs to the G-protein coupled receptor 2 family. Adhesion G-protein coupled receptor (ADGR) subfamily. As to quaternary structure, heterodimer of 2 chains generated by proteolytic processing; the large extracellular N-terminal fragment and the membrane-bound C-terminal fragment predominantly remain associated and non-covalently linked. Autoproteolytically processed at the GPS region of the GAIN-B domain; this cleavage modulates receptor activity. As to expression, expressed at least in kidney, heart, brain and spleen. Isoform 1 is predominant in spleen. In the kidney, both isoform 1 and isoform 2 are expressed at similar levels. In terms of tissue distribution, isoform 2 is the major form in heart and brain. In the kidney, both isoform 1 and isoform 2 are expressed at similar levels.

The protein localises to the cell membrane. With respect to regulation, forms a heterodimer of 2 chains generated by proteolytic processing that remain associated through non-covalent interactions mediated by the GAIN-B domain. In the inactivated receptor, the Stachel sequence (also named stalk) is embedded in the GAIN-B domain, where it adopts a beta-strand conformation. On activation, the Stachel moves into the 7 transmembrane region and adopts a twisted hook-shaped configuration that forms contacts within the receptor, leading to coupling of a G-alpha protein, which activates signaling. The cleaved GAIN-B and N-terminal domains can then dissociate from the rest of the receptor. Its function is as follows. Orphan adhesion G-protein coupled receptor (aGPCR). Ligand binding causes a conformation change that triggers signaling via guanine nucleotide-binding proteins (G proteins) and modulates the activity of downstream effectors, such as adenylate cyclase. ADGRG5 is specifically coupled to G(s) G proteins and mediates activation of adenylate cyclase activity. Functionally, isoform 1, but not isoform 2, is constitutively active, as evidenced by elevated basal cAMP levels, and responds to mechanical activation (shaking). The protein is Adhesion G-protein coupled receptor G5 of Mus musculus (Mouse).